A 722-amino-acid polypeptide reads, in one-letter code: MVKTPMFHKKIDYISQVDERDCGVAALAMILAHYKTRLSLAKLRDLAKTDMEGTTALGIVKAANALDFETMPIQADLSLFDKKDLPYPFIAHVIKEGKYPHYYVVYGMKGDQLLIADPDNTVGKTKMTKAHFNEEWTGVSIFIAPNPTYKPTKEKKRSLTSFIPVITRQKLLVINIVIAALLVTLVSILGSYYLQGIIDTYIPNNMKNTLGIVSLGLIFAYVIQQLLSYARDYLLIVMGQRLSIDIILSYIKHIFELPMSFFATRRTGEIVSRFTDANAIIEALASTMLSVFLDLGILVIVGTVLVVQNSTLFLISLIAIPAYALVVWLFMRPFSKMNNDQMQAGSMLSSSIIEDINGVETIKALNSEATAYHKIDHEFVTYLEKSFVYAKTEAVQNAIKSLLQLSLNVVILWVGAQLVMTNKISVGQLITYNALLGFFTDPLQNIINLQTKLQQASVANNRLNEVYLVDSEFKDSHQMTEKITPNSSLVADHITYKYGFGAPAIDDVSLTITAGEKIALVGISGSGKSTLVKLLVNFFQPESGTISLGPTPLANLDKHELRGHINYLPQEPFIFSGSIMENLLLGAKPGTTQEDIIRAVEIAEIKDDIEKMSQGFGTELAESGNISGGQKQRIALARAILVDSPVLILDESTSNLDVLTEKKIIDNLMKLTEKTIIFVAHRLTISQRVDRILTMQSGKIIEDGTHDTLLKAGGFYASLFNH.

The 128-residue stretch at 16 to 143 (QVDERDCGVA…EEWTGVSIFI (128 aa)) folds into the Peptidase C39 domain. C22 is a catalytic residue. The next 8 helical transmembrane spans lie at 171–191 (LLVI…ILGS), 210–230 (LGIV…LSYA), 242–262 (LSID…MSFF), 287–307 (TMLS…VLVV), 311–331 (TLFL…WLFM), 401–421 (SLLQ…LVMT), 429–449 (LITY…IINL), and 518–538 (IALV…LVNF). The region spanning 173 to 455 (VINIVIAALL…IINLQTKLQQ (283 aa)) is the ABC transmembrane type-1 domain. The 234-residue stretch at 489-722 (LVADHITYKY…GGFYASLFNH (234 aa)) folds into the ABC transporter domain. ATP is bound at residue 522–529 (GISGSGKS).

The protein belongs to the ABC transporter superfamily.

Its subcellular location is the cell membrane. Its function is as follows. Involved in the export process of the bacteriocin mesentericin-Y105. The polypeptide is Mesentericin-Y105 transport/processing ATP-binding protein MesD (mesD) (Leuconostoc mesenteroides).